The primary structure comprises 512 residues: tRNA-2-methylthio-N(6)-dimethylallyladenosine synthase (512 aa).

The interval Met-1–Ala-22 is disordered. One can recognise an MTTase N-terminal domain in the interval Arg-25–His-141. Cys-34, Cys-70, Cys-104, Cys-178, Cys-182, and Cys-185 together coordinate [4Fe-4S] cluster. The 237-residue stretch at Arg-164–Glu-400 folds into the Radical SAM core domain. The region spanning Arg-403–Val-471 is the TRAM domain.

Belongs to the methylthiotransferase family. MiaB subfamily. In terms of assembly, monomer. Requires [4Fe-4S] cluster as cofactor.

The protein localises to the cytoplasm. The enzyme catalyses N(6)-dimethylallyladenosine(37) in tRNA + (sulfur carrier)-SH + AH2 + 2 S-adenosyl-L-methionine = 2-methylsulfanyl-N(6)-dimethylallyladenosine(37) in tRNA + (sulfur carrier)-H + 5'-deoxyadenosine + L-methionine + A + S-adenosyl-L-homocysteine + 2 H(+). In terms of biological role, catalyzes the methylthiolation of N6-(dimethylallyl)adenosine (i(6)A), leading to the formation of 2-methylthio-N6-(dimethylallyl)adenosine (ms(2)i(6)A) at position 37 in tRNAs that read codons beginning with uridine. The protein is tRNA-2-methylthio-N(6)-dimethylallyladenosine synthase of Mycobacterium bovis (strain ATCC BAA-935 / AF2122/97).